We begin with the raw amino-acid sequence, 129 residues long: 3-aminoacrylate deaminase RutC (129 aa).

This sequence belongs to the RutC family.

The enzyme catalyses (Z)-3-aminoacrylate + H2O + H(+) = 3-oxopropanoate + NH4(+). Its function is as follows. Involved in pyrimidine catabolism. Catalyzes the deamination of 3-aminoacrylate to malonic semialdehyde, a reaction that can also occur spontaneously. RutC may facilitate the reaction and modulate the metabolic fitness, rather than catalyzing essential functions. In Caulobacter segnis (strain ATCC 21756 / DSM 7131 / JCM 7823 / NBRC 15250 / LMG 17158 / TK0059) (Mycoplana segnis), this protein is 3-aminoacrylate deaminase RutC.